A 419-amino-acid polypeptide reads, in one-letter code: G protein-activated inward rectifier potassium channel 4 (419 aa).

At 1-86 (MAGDSRNAMN…LFTTLVDLKW (86 aa)) the chain is on the cytoplasmic side. Ser5 is modified (phosphoserine). The chain crosses the membrane as a helical span at residues 87–111 (RFNLLVFTMVYTVTWLFFGFIWWLI). Topologically, residues 112-135 (AYIRGDLDHVGDQEWIPCVENLSG) are extracellular. Positions 136–147 (FVSAFLFSIETE) form an intramembrane region, helical; Pore-forming. An intramembrane region (pore-forming) is located at residues 148–154 (TTIGYGF). The Selectivity filter signature appears at 149 to 154 (TIGYGF). The Extracellular segment spans residues 155 to 163 (RVITEKCPE). Residues 164–185 (GIILLLVQAILGSIVNAFMVGC) traverse the membrane as a helical segment. Over 186–419 (MFVKISQPKK…GGSREARGSV (234 aa)) the chain is Cytoplasmic. Residues 390-419 (AEAGLDAEAEQNEEDEPKGLGGSREARGSV) form a disordered region. Positions 394–405 (LDAEAEQNEEDE) are enriched in acidic residues.

This sequence belongs to the inward rectifier-type potassium channel (TC 1.A.2.1) family. KCNJ5 subfamily. As to quaternary structure, associates with KCNJ3/GIRK1 to form a G-protein-activated heteromultimer pore-forming unit. The resulting inward current is much larger. Associates with KCNJ6/GIRK2 to form a G-protein-activated heteromultimer pore-forming unit. As to expression, islets, exocrine pancreas and heart. Expressed in the adrenal cortex, particularly the zona glomerulosa.

The protein resides in the membrane. It catalyses the reaction K(+)(in) = K(+)(out). Heteromultimer composed of KCNJ3/GIRK1 and KCNJ5/GIRK4 is activated by phosphatidylinositol 4,5 biphosphate (PtdIns(4,5)P2). Its function is as follows. Inward rectifier potassium channels are characterized by a greater tendency to allow potassium to flow into the cell rather than out of it. Their voltage dependence is regulated by the concentration of extracellular potassium; as external potassium is raised, the voltage range of the channel opening shifts to more positive voltages. The inward rectification is mainly due to the blockage of outward current by internal magnesium. Can be blocked by external barium. This potassium channel is controlled by G proteins. The polypeptide is G protein-activated inward rectifier potassium channel 4 (KCNJ5) (Homo sapiens (Human)).